We begin with the raw amino-acid sequence, 34 residues long: Protein HRURF (34 aa).

Functionally, may function as an inhibitory translational control element that can negatively regulate protein translation of HR gene. The protein is Protein HRURF of Homo sapiens (Human).